A 186-amino-acid polypeptide reads, in one-letter code: Ribosome-recycling factor (186 aa).

This sequence belongs to the RRF family.

The protein resides in the cytoplasm. Functionally, responsible for the release of ribosomes from messenger RNA at the termination of protein biosynthesis. May increase the efficiency of translation by recycling ribosomes from one round of translation to another. This chain is Ribosome-recycling factor, found in Acidovorax ebreus (strain TPSY) (Diaphorobacter sp. (strain TPSY)).